The sequence spans 170 residues: Lipoprotein signal peptidase (170 aa).

A run of 3 helical transmembrane segments spans residues 12 to 32 (WYWV…WVLA), 67 to 87 (WQRW…TVWL), and 93 to 113 (SLLK…GNLV). Catalysis depends on residues aspartate 123 and aspartate 141. A helical transmembrane segment spans residues 137 to 157 (FNIADSAIFIGAVLIIWDSFF).

This sequence belongs to the peptidase A8 family.

The protein localises to the cell inner membrane. It catalyses the reaction Release of signal peptides from bacterial membrane prolipoproteins. Hydrolyzes -Xaa-Yaa-Zaa-|-(S,diacylglyceryl)Cys-, in which Xaa is hydrophobic (preferably Leu), and Yaa (Ala or Ser) and Zaa (Gly or Ala) have small, neutral side chains.. It functions in the pathway protein modification; lipoprotein biosynthesis (signal peptide cleavage). Functionally, this protein specifically catalyzes the removal of signal peptides from prolipoproteins. The chain is Lipoprotein signal peptidase from Shewanella oneidensis (strain ATCC 700550 / JCM 31522 / CIP 106686 / LMG 19005 / NCIMB 14063 / MR-1).